A 194-amino-acid chain; its full sequence is UPF0301 protein FTH_1193 (194 aa).

Belongs to the UPF0301 (AlgH) family.

This Francisella tularensis subsp. holarctica (strain OSU18) protein is UPF0301 protein FTH_1193.